A 113-amino-acid polypeptide reads, in one-letter code: Putative pterin-4-alpha-carbinolamine dehydratase (113 aa).

The protein belongs to the pterin-4-alpha-carbinolamine dehydratase family.

The enzyme catalyses (4aS,6R)-4a-hydroxy-L-erythro-5,6,7,8-tetrahydrobiopterin = (6R)-L-erythro-6,7-dihydrobiopterin + H2O. In Rickettsia bellii (strain OSU 85-389), this protein is Putative pterin-4-alpha-carbinolamine dehydratase.